A 768-amino-acid polypeptide reads, in one-letter code: Vitamin B12-dependent ribonucleoside-diphosphate reductase (768 aa).

The ATP-cone domain maps to 3-97 (KEVVKRDGTV…LYREKRRAIR (95 aa)). Substrate contacts are provided by residues S234, 249-250 (AC), G278, 432-436 (NPCGE), and 579-583 (PTGTI). C250 and C445 are disulfide-bonded. The Proton acceptor role is filled by N432. C434 functions as the Cysteine radical intermediate in the catalytic mechanism. E436 (proton acceptor) is an active-site residue.

It belongs to the ribonucleoside diphosphate reductase class-2 family. Monomer. Adenosylcob(III)alamin serves as cofactor.

It carries out the reaction a 2'-deoxyribonucleoside 5'-diphosphate + [thioredoxin]-disulfide + H2O = a ribonucleoside 5'-diphosphate + [thioredoxin]-dithiol. Functionally, provides the precursors necessary for DNA synthesis. Catalyzes the biosynthesis of deoxyribonucleotides from the corresponding ribonucleotides. This Thermoplasma acidophilum (strain ATCC 25905 / DSM 1728 / JCM 9062 / NBRC 15155 / AMRC-C165) protein is Vitamin B12-dependent ribonucleoside-diphosphate reductase.